The chain runs to 526 residues: Microphthalmia-associated transcription factor (526 aa).

The segment at 1–54 (MQSESGIVPDFEVGEEFHEEPKTYYELKSQPLKSSSSAEHPGASKPPISSSSMT) is disordered. Residue Ser-5 is modified to Phosphoserine; by MTOR. A compositionally biased stretch (basic and acidic residues) spans 15–25 (EEFHEEPKTYY). Residues 41–54 (PGASKPPISSSSMT) are compositionally biased toward low complexity. Ser-180 is subject to Phosphoserine; by MAPK. Residues 224 to 295 (DDVIDDIISL…PNIKRELTAC (72 aa)) are transactivation. Ser-280 carries the phosphoserine; by MARK3 modification. A Glycyl lysine isopeptide (Lys-Gly) (interchain with G-Cter in SUMO) cross-link involves residue Lys-289. One can recognise a bHLH domain in the interval 311–364 (QKKDNHNLIERRRRFNINDRIKELGTLIPKSNDPDMRWNKGTILKASVDYIRKL). A coiled-coil region spans residues 355–402 (KASVDYIRKLQREQQRAKELENRQKKLEHANRHLLLRIQELEMQARAH). Residues 374–395 (LENRQKKLEHANRHLLLRIQEL) are leucine-zipper. The DNA-binding regulation stretch occupies residues 401–431 (AHGLSLIPSTGLCSPDLVNRIIKQEPVLENC). Ser-405 carries the post-translational modification Phosphoserine; by GSK3. Ser-414 is subject to Phosphoserine. Residue Lys-423 forms a Glycyl lysine isopeptide (Lys-Gly) (interchain with G-Cter in SUMO) linkage. Ser-491 is modified (phosphoserine). The interval 496–526 (TDPLLSSVSPGASKTSSRRSSMSMEETEHTC) is disordered. Positions 499 to 509 (LLSSVSPGASK) are enriched in polar residues. Residue Ser-516 is modified to Phosphoserine; by RPS6KA1.

It belongs to the MiT/TFE family. In terms of assembly, homodimer or heterodimer; dimerization is mediated via the coiled coil region. Efficient DNA binding requires dimerization with another bHLH protein. Binds DNA in the form of homodimer or heterodimer with either TFE3, TFEB or TFEC. Interacts with small GTPases Rag (RagA/RRAGA, RagB/RRAGB, RagC/RRAGC and/or RagD/RRAGD); promoting its recruitment to lysosomal membrane in the presence of nutrients. Interacts with KARS1. Identified in a complex with HINT1 and CTNNB1. Interacts with VSX2. When nutrients are present, phosphorylation by MTOR at Ser-5 via non-canonical mTORC1 pathway promotes ubiquitination by the SCF(BTRC) complex, followed by degradation. Phosphorylation at Ser-405 significantly enhances the ability to bind the tyrosinase promoter. Phosphorylation by MARK3/cTAK1 at Ser-280 promotes association with 14-3-3/YWHA adapters and retention in the cytosol. Phosphorylated at Ser-180 and Ser-516 following KIT signaling, triggering a short live activation: Phosphorylation at Ser-180 and Ser-516 by MAPK and RPS6KA1, respectively, activate the transcription factor activity but also promote ubiquitination and subsequent degradation by the proteasome. Phosphorylated in response to blue light (415nm). Post-translationally, ubiquitinated by the SCF(BTRC) and SCF(FBXW11) complexes following phosphorylation ar Ser-5 by MTOR, leading to its degradation by the proteasome. Ubiquitinated following phosphorylation at Ser-180, leading to subsequent degradation by the proteasome. Deubiquitinated by USP13, preventing its degradation. As to expression, expressed in melanocytes (at protein level). Expressed in the retinal pigment epithelium, brain, and placenta. Expressed in the kidney. In terms of tissue distribution, expressed in the kidney and retinal pigment epithelium. As to expression, expressed in the kidney. Expressed in melanocytes.

Its subcellular location is the nucleus. It localises to the cytoplasm. The protein localises to the lysosome membrane. Transcription factor that acts as a master regulator of melanocyte survival and differentiation as well as melanosome biogenesis. Binds to M-boxes (5'-TCATGTG-3') and symmetrical DNA sequences (E-boxes) (5'-CACGTG-3') found in the promoter of pigmentation genes, such as tyrosinase (TYR). Involved in the cellular response to amino acid availability by acting downstream of MTOR: in the presence of nutrients, MITF phosphorylation by MTOR promotes its inactivation. Upon starvation or lysosomal stress, inhibition of MTOR induces MITF dephosphorylation, resulting in transcription factor activity. Plays an important role in melanocyte development by regulating the expression of tyrosinase (TYR) and tyrosinase-related protein 1 (TYRP1). Plays a critical role in the differentiation of various cell types, such as neural crest-derived melanocytes, mast cells, osteoclasts and optic cup-derived retinal pigment epithelium. The polypeptide is Microphthalmia-associated transcription factor (Homo sapiens (Human)).